A 1068-amino-acid polypeptide reads, in one-letter code: DNA-directed RNA polymerase subunit beta (1068 aa).

This sequence belongs to the RNA polymerase beta chain family. In plastids the minimal PEP RNA polymerase catalytic core is composed of four subunits: alpha, beta, beta', and beta''. When a (nuclear-encoded) sigma factor is associated with the core the holoenzyme is formed, which can initiate transcription.

It is found in the plastid. Its subcellular location is the chloroplast. The catalysed reaction is RNA(n) + a ribonucleoside 5'-triphosphate = RNA(n+1) + diphosphate. Its function is as follows. DNA-dependent RNA polymerase catalyzes the transcription of DNA into RNA using the four ribonucleoside triphosphates as substrates. The chain is DNA-directed RNA polymerase subunit beta from Staurastrum punctulatum (Green alga).